The primary structure comprises 145 residues: Basic phospholipase A2 cPt09 (145 aa).

The N-terminal stretch at 1–21 (MYPAHLLVLLAVCVSLLGAST) is a signal peptide. Residues 22-27 (IPPLPL) constitute a propeptide that is removed on maturation. Disulfide bonds link Cys-38-Cys-98, Cys-54-Cys-144, Cys-56-Cys-72, Cys-71-Cys-125, Cys-78-Cys-118, Cys-87-Cys-111, and Cys-105-Cys-116. Residues Tyr-55, Gly-57, and Gly-59 each coordinate Ca(2+). His-75 is an active-site residue. Asp-76 provides a ligand contact to Ca(2+). The active site involves Asp-119.

Belongs to the phospholipase A2 family. Group I subfamily. D49 sub-subfamily. It depends on Ca(2+) as a cofactor. As to expression, expressed by the venom gland.

It localises to the secreted. It catalyses the reaction a 1,2-diacyl-sn-glycero-3-phosphocholine + H2O = a 1-acyl-sn-glycero-3-phosphocholine + a fatty acid + H(+). In terms of biological role, PLA2 catalyzes the calcium-dependent hydrolysis of the 2-acyl groups in 3-sn-phosphoglycerides. The chain is Basic phospholipase A2 cPt09 from Laticauda semifasciata (Black-banded sea krait).